We begin with the raw amino-acid sequence, 248 residues long: Pyridoxine 5'-phosphate synthase (248 aa).

Residue Asn11 participates in 3-amino-2-oxopropyl phosphate binding. Position 13 to 14 (13 to 14) interacts with 1-deoxy-D-xylulose 5-phosphate; the sequence is DH. Arg22 contributes to the 3-amino-2-oxopropyl phosphate binding site. Residue His47 is the Proton acceptor of the active site. The 1-deoxy-D-xylulose 5-phosphate site is built by Arg49 and His54. Glu74 functions as the Proton acceptor in the catalytic mechanism. A 1-deoxy-D-xylulose 5-phosphate-binding site is contributed by Thr104. The Proton donor role is filled by His198. 3-amino-2-oxopropyl phosphate-binding positions include Gly199 and 220–221; that span reads GH.

Belongs to the PNP synthase family. Homooctamer; tetramer of dimers.

The protein resides in the cytoplasm. It catalyses the reaction 3-amino-2-oxopropyl phosphate + 1-deoxy-D-xylulose 5-phosphate = pyridoxine 5'-phosphate + phosphate + 2 H2O + H(+). The protein operates within cofactor biosynthesis; pyridoxine 5'-phosphate biosynthesis; pyridoxine 5'-phosphate from D-erythrose 4-phosphate: step 5/5. In terms of biological role, catalyzes the complicated ring closure reaction between the two acyclic compounds 1-deoxy-D-xylulose-5-phosphate (DXP) and 3-amino-2-oxopropyl phosphate (1-amino-acetone-3-phosphate or AAP) to form pyridoxine 5'-phosphate (PNP) and inorganic phosphate. This is Pyridoxine 5'-phosphate synthase from Ruegeria pomeroyi (strain ATCC 700808 / DSM 15171 / DSS-3) (Silicibacter pomeroyi).